We begin with the raw amino-acid sequence, 345 residues long: Glycerol-3-phosphate dehydrogenase [NAD(P)+] (345 aa).

5 residues coordinate NADPH: serine 11, tryptophan 12, histidine 32, arginine 33, and lysine 106. Sn-glycerol 3-phosphate is bound by residues lysine 106, glycine 137, and serine 139. Alanine 141 is an NADPH binding site. Positions 192, 245, 255, 256, and 257 each coordinate sn-glycerol 3-phosphate. The active-site Proton acceptor is the lysine 192. Arginine 256 contacts NADPH. NADPH is bound by residues valine 280 and glutamate 282.

This sequence belongs to the NAD-dependent glycerol-3-phosphate dehydrogenase family.

The protein localises to the cytoplasm. It carries out the reaction sn-glycerol 3-phosphate + NAD(+) = dihydroxyacetone phosphate + NADH + H(+). The catalysed reaction is sn-glycerol 3-phosphate + NADP(+) = dihydroxyacetone phosphate + NADPH + H(+). It participates in membrane lipid metabolism; glycerophospholipid metabolism. In terms of biological role, catalyzes the reduction of the glycolytic intermediate dihydroxyacetone phosphate (DHAP) to sn-glycerol 3-phosphate (G3P), the key precursor for phospholipid synthesis. This Bacillus pumilus (strain SAFR-032) protein is Glycerol-3-phosphate dehydrogenase [NAD(P)+].